The chain runs to 225 residues: U2 small nuclear ribonucleoprotein B'' (225 aa).

The RRM 1 domain occupies 7–86 (HTIYINNMND…KPMRIQYAKT (80 aa)). A disordered region spans residues 99 to 145 (ADKEKKKEKKKAKTVEQTATTTNKKPGQGTPNSANTQGNSTPNPQVP). Lys111 bears the N6-acetyllysine; alternate mark. Lys111 participates in a covalent cross-link: Glycyl lysine isopeptide (Lys-Gly) (interchain with G-Cter in SUMO2); alternate. The span at 113-123 (VEQTATTTNKK) shows a compositional bias: low complexity. Polar residues predominate over residues 127–141 (GTPNSANTQGNSTPN). Tyr151 bears the Phosphotyrosine mark. In terms of domain architecture, RRM 2 spans 151 to 225 (YILFLNNLPE…HAMKITYAKK (75 aa)).

It belongs to the RRM U1 A/B'' family. In terms of assembly, identified in the spliceosome B complex. Identified in the spliceosome C complex. Present in a spliceosome complex assembled in vitro, and composed of SNRPB2, HPRP8BP and CRNKL1. Contributes to the binding of stem loop IV of U2 snRNA with SNRPP1.

The protein localises to the nucleus. Functionally, involved in pre-mRNA splicing as component of the spliceosome. Associated with sn-RNP U2, where it contributes to the binding of stem loop IV of U2 snRNA. This is U2 small nuclear ribonucleoprotein B'' (SNRPB2) from Homo sapiens (Human).